Here is a 332-residue protein sequence, read N- to C-terminus: uncharacterized protein (332 aa).

This sequence belongs to the peptidase U32 family.

This is an uncharacterized protein from Methanocaldococcus jannaschii (strain ATCC 43067 / DSM 2661 / JAL-1 / JCM 10045 / NBRC 100440) (Methanococcus jannaschii).